Consider the following 121-residue polypeptide: uncharacterized protein (121 aa).

This is an uncharacterized protein from Ictaluridae (bullhead catfishes).